Reading from the N-terminus, the 284-residue chain is 4-diphosphocytidyl-2-C-methyl-D-erythritol kinase (284 aa).

Lys-14 is a catalytic residue. Residue 98 to 108 participates in ATP binding; that stretch reads PMGGGLGGGSS. Asp-140 is a catalytic residue.

This sequence belongs to the GHMP kinase family. IspE subfamily.

It catalyses the reaction 4-CDP-2-C-methyl-D-erythritol + ATP = 4-CDP-2-C-methyl-D-erythritol 2-phosphate + ADP + H(+). Its pathway is isoprenoid biosynthesis; isopentenyl diphosphate biosynthesis via DXP pathway; isopentenyl diphosphate from 1-deoxy-D-xylulose 5-phosphate: step 3/6. In terms of biological role, catalyzes the phosphorylation of the position 2 hydroxy group of 4-diphosphocytidyl-2C-methyl-D-erythritol. This is 4-diphosphocytidyl-2-C-methyl-D-erythritol kinase from Shewanella baltica (strain OS185).